The primary structure comprises 204 residues: MVQSYEDMLKAAYSGIGEPTETGERFVMPKAKIYIEGKTTVLENFSDIVDSLNRDKDHFMKFILGELGTAGKIDGNRAVFNGKFEQAQFDAILETYVGDYVICSECGRPDTKLVKDDRVLMLLCEACGSKRPIRKRKAKTEVQGPAIEEGKELEVHIESISKKGDGVARIGKYILYVAGTKAGQNVKVRITRISGQVAFTQKIL.

The TRAM domain maps to 146-204; the sequence is AIEEGKELEVHIESISKKGDGVARIGKYILYVAGTKAGQNVKVRITRISGQVAFTQKIL.

This sequence belongs to the eIF-2-beta/eIF-5 family. As to quaternary structure, heterotrimer composed of an alpha, a beta and a gamma chain.

In terms of biological role, eIF-2 functions in the early steps of protein synthesis by forming a ternary complex with GTP and initiator tRNA. The chain is Translation initiation factor 2 subunit beta from Methanocorpusculum labreanum (strain ATCC 43576 / DSM 4855 / Z).